Reading from the N-terminus, the 101-residue chain is uncharacterized protein (101 aa).

Residues 39-74 are disordered; sequence CDERHGRPLPHSQESQHGSATSKKAVRGTADTAPLE. A compositionally biased stretch (polar residues) spans 50–60; that stretch reads SQESQHGSATS.

This is an uncharacterized protein from Homo sapiens (Human).